Here is a 425-residue protein sequence, read N- to C-terminus: Serine--tRNA ligase (425 aa).

230–232 (TAE) contacts L-serine. 261-263 (RSE) is a binding site for ATP. Position 284 (glutamate 284) interacts with L-serine. 348 to 351 (EISS) is a binding site for ATP. Residue serine 384 participates in L-serine binding.

The protein belongs to the class-II aminoacyl-tRNA synthetase family. Type-1 seryl-tRNA synthetase subfamily. In terms of assembly, homodimer. The tRNA molecule binds across the dimer.

The protein localises to the cytoplasm. It carries out the reaction tRNA(Ser) + L-serine + ATP = L-seryl-tRNA(Ser) + AMP + diphosphate + H(+). The enzyme catalyses tRNA(Sec) + L-serine + ATP = L-seryl-tRNA(Sec) + AMP + diphosphate + H(+). It participates in aminoacyl-tRNA biosynthesis; selenocysteinyl-tRNA(Sec) biosynthesis; L-seryl-tRNA(Sec) from L-serine and tRNA(Sec): step 1/1. Catalyzes the attachment of serine to tRNA(Ser). Is also able to aminoacylate tRNA(Sec) with serine, to form the misacylated tRNA L-seryl-tRNA(Sec), which will be further converted into selenocysteinyl-tRNA(Sec). The chain is Serine--tRNA ligase from Streptococcus pyogenes serotype M2 (strain MGAS10270).